We begin with the raw amino-acid sequence, 175 residues long: MSIDDLKSKIPDFAKDVRLNLSSMASDETLTPQQKYGLFVACGIASRNADVRKALVAEAAAKVDASVIQAAKSAASIMGMNNVYYRFVHLATNKDYRTMPAKLRMNVIGNPGVDKIDFELWSLAVSAINGCGMCIDAHEDVLRKANVTSETIQTAVRFASIIQSVAIALEAADTE.

C131 (proton donor) is an active-site residue. C131 and C134 form a disulfide bridge. The active-site Cysteine sulfenic acid (-SOH) intermediate is the C134.

It belongs to the AhpD family.

It catalyses the reaction N(6)-[(R)-dihydrolipoyl]-L-lysyl-[lipoyl-carrier protein] + a hydroperoxide = N(6)-[(R)-lipoyl]-L-lysyl-[lipoyl-carrier protein] + an alcohol + H2O. Its function is as follows. Antioxidant protein with alkyl hydroperoxidase activity. Required for the reduction of the AhpC active site cysteine residues and for the regeneration of the AhpC enzyme activity. This chain is Alkyl hydroperoxide reductase AhpD, found in Brucella anthropi (strain ATCC 49188 / DSM 6882 / CCUG 24695 / JCM 21032 / LMG 3331 / NBRC 15819 / NCTC 12168 / Alc 37) (Ochrobactrum anthropi).